Here is a 526-residue protein sequence, read N- to C-terminus: 3',5'-cyclic-nucleotide phosphodiesterase 2 (526 aa).

Positions 182–526 constitute a PDEase domain; sequence RNIEFMSFLS…EYWMKHKKPQ (345 aa). Catalysis depends on histidine 265, which acts as the Proton donor. 4 residues coordinate a divalent metal cation: histidine 269, histidine 302, aspartate 303, and aspartate 400.

Belongs to the cyclic nucleotide phosphodiesterase family. Monomer. A divalent metal cation serves as cofactor.

It carries out the reaction 3',5'-cyclic AMP + H2O = AMP + H(+). Controls the level of cAMP in yeast cells, together with the low-affinity cAMP phosphodiesterase (PDE1). The chain is 3',5'-cyclic-nucleotide phosphodiesterase 2 from Saccharomyces cerevisiae (strain ATCC 204508 / S288c) (Baker's yeast).